A 101-amino-acid polypeptide reads, in one-letter code: Small ribosomal subunit protein uS14 (101 aa).

It belongs to the universal ribosomal protein uS14 family. Part of the 30S ribosomal subunit. Contacts proteins S3 and S10.

In terms of biological role, binds 16S rRNA, required for the assembly of 30S particles and may also be responsible for determining the conformation of the 16S rRNA at the A site. The protein is Small ribosomal subunit protein uS14 of Dinoroseobacter shibae (strain DSM 16493 / NCIMB 14021 / DFL 12).